The primary structure comprises 366 residues: Aminomethyltransferase (366 aa).

The protein belongs to the GcvT family. As to quaternary structure, the glycine cleavage system is composed of four proteins: P, T, L and H.

It catalyses the reaction N(6)-[(R)-S(8)-aminomethyldihydrolipoyl]-L-lysyl-[protein] + (6S)-5,6,7,8-tetrahydrofolate = N(6)-[(R)-dihydrolipoyl]-L-lysyl-[protein] + (6R)-5,10-methylene-5,6,7,8-tetrahydrofolate + NH4(+). Functionally, the glycine cleavage system catalyzes the degradation of glycine. The chain is Aminomethyltransferase from Bacillus anthracis (strain A0248).